The chain runs to 180 residues: Cytokinin-beta-glucosidase 3 (180 aa).

Its function is as follows. Hydrolyzes cytokinin glucosides thus liberating free cytokinins. This is Cytokinin-beta-glucosidase 3 (ROLC3) from Panax ginseng (Korean ginseng).